The sequence spans 139 residues: D-ribose pyranase (139 aa).

H20 serves as the catalytic Proton donor. Substrate contacts are provided by residues D28, H106, and 128–130; that span reads YAN.

Belongs to the RbsD / FucU family. RbsD subfamily. Homodecamer.

Its subcellular location is the cytoplasm. The enzyme catalyses beta-D-ribopyranose = beta-D-ribofuranose. It functions in the pathway carbohydrate metabolism; D-ribose degradation; D-ribose 5-phosphate from beta-D-ribopyranose: step 1/2. In terms of biological role, catalyzes the interconversion of beta-pyran and beta-furan forms of D-ribose. The polypeptide is D-ribose pyranase (Maridesulfovibrio salexigens (strain ATCC 14822 / DSM 2638 / NCIMB 8403 / VKM B-1763) (Desulfovibrio salexigens)).